The primary structure comprises 128 residues: Aspartate 1-decarboxylase (128 aa).

The active-site Schiff-base intermediate with substrate; via pyruvic acid is Ser25. Ser25 carries the pyruvic acid (Ser) modification. Thr57 lines the substrate pocket. Tyr58 (proton donor) is an active-site residue. 73–75 (GSA) lines the substrate pocket.

This sequence belongs to the PanD family. As to quaternary structure, heterooctamer of four alpha and four beta subunits. Pyruvate serves as cofactor. Post-translationally, is synthesized initially as an inactive proenzyme, which is activated by self-cleavage at a specific serine bond to produce a beta-subunit with a hydroxyl group at its C-terminus and an alpha-subunit with a pyruvoyl group at its N-terminus.

It localises to the cytoplasm. It carries out the reaction L-aspartate + H(+) = beta-alanine + CO2. Its pathway is cofactor biosynthesis; (R)-pantothenate biosynthesis; beta-alanine from L-aspartate: step 1/1. Catalyzes the pyruvoyl-dependent decarboxylation of aspartate to produce beta-alanine. The polypeptide is Aspartate 1-decarboxylase (Paraburkholderia xenovorans (strain LB400)).